The chain runs to 571 residues: Sulfite reductase [NADPH] hemoprotein beta-component (571 aa).

4 residues coordinate [4Fe-4S] cluster: cysteine 436, cysteine 442, cysteine 481, and cysteine 485. A siroheme-binding site is contributed by cysteine 485.

The protein belongs to the nitrite and sulfite reductase 4Fe-4S domain family. Alpha(8)-beta(8). The alpha component is a flavoprotein, the beta component is a hemoprotein. Siroheme serves as cofactor. [4Fe-4S] cluster is required as a cofactor.

It catalyses the reaction hydrogen sulfide + 3 NADP(+) + 3 H2O = sulfite + 3 NADPH + 4 H(+). It participates in sulfur metabolism; hydrogen sulfide biosynthesis; hydrogen sulfide from sulfite (NADPH route): step 1/1. In terms of biological role, component of the sulfite reductase complex that catalyzes the 6-electron reduction of sulfite to sulfide. This is one of several activities required for the biosynthesis of L-cysteine from sulfate. This chain is Sulfite reductase [NADPH] hemoprotein beta-component, found in Bacillus velezensis (strain DSM 23117 / BGSC 10A6 / LMG 26770 / FZB42) (Bacillus amyloliquefaciens subsp. plantarum).